Consider the following 669-residue polypeptide: DNA ligase (669 aa).

NAD(+) is bound by residues 34 to 38 (DAEYD), 83 to 84 (SL), and Glu-114. Lys-116 functions as the N6-AMP-lysine intermediate in the catalytic mechanism. Arg-137, Glu-171, Lys-287, and Lys-311 together coordinate NAD(+). Zn(2+) is bound by residues Cys-405, Cys-408, Cys-423, and Cys-428. The BRCT domain maps to 591–669 (NVESYFAGKT…EERFLQELNK (79 aa)).

This sequence belongs to the NAD-dependent DNA ligase family. LigA subfamily. The cofactor is Mg(2+). It depends on Mn(2+) as a cofactor.

It carries out the reaction NAD(+) + (deoxyribonucleotide)n-3'-hydroxyl + 5'-phospho-(deoxyribonucleotide)m = (deoxyribonucleotide)n+m + AMP + beta-nicotinamide D-nucleotide.. Its function is as follows. DNA ligase that catalyzes the formation of phosphodiester linkages between 5'-phosphoryl and 3'-hydroxyl groups in double-stranded DNA using NAD as a coenzyme and as the energy source for the reaction. It is essential for DNA replication and repair of damaged DNA. The protein is DNA ligase of Bacillus anthracis (strain A0248).